Reading from the N-terminus, the 337-residue chain is MQVYYDKDADLSLIKGKTVAIIGYGSQGHAHAANLKDSGVNVVIGLRQGSSWKKAEAAGHVVKTVAEATKEADVVMLLLPDETMPAVYHAEVAANLKEGATLAFAHGFNVHYNQIVPRADLDVIMVAPKGPGHTVRSEYKRGGGVPSLIAVYQDNSGKAKDIALSYAAANGGTKGGVIETTFREETETDLFGEQAVLCGGVVELIKAGFETLTEAGYAPEMAYFECLHEMKLIVDLIFEGGIANMNYSISNNAEYGEYVTGPEVVNASSKEAMRNALKRIQTGEYAKMFIQEGNVNYASMTARRRLNADHQVEKVGAQLRAMMPWITANKLVDQDKN.

Positions 1–180 constitute a KARI N-terminal Rossmann domain; it reads MQVYYDKDAD…GGTKGGVIET (180 aa). Residues 24–27, Arg-47, and Ser-51 each bind NADP(+); that span reads YGSQ. Residue His-106 is part of the active site. NADP(+) is bound at residue Gly-132. Residues 181–326 form the KARI C-terminal knotted domain; that stretch reads TFREETETDL…AQLRAMMPWI (146 aa). 4 residues coordinate Mg(2+): Asp-189, Glu-193, Glu-225, and Glu-229. Ser-250 serves as a coordination point for substrate.

This sequence belongs to the ketol-acid reductoisomerase family. Mg(2+) serves as cofactor.

The enzyme catalyses (2R)-2,3-dihydroxy-3-methylbutanoate + NADP(+) = (2S)-2-acetolactate + NADPH + H(+). It catalyses the reaction (2R,3R)-2,3-dihydroxy-3-methylpentanoate + NADP(+) = (S)-2-ethyl-2-hydroxy-3-oxobutanoate + NADPH + H(+). It participates in amino-acid biosynthesis; L-isoleucine biosynthesis; L-isoleucine from 2-oxobutanoate: step 2/4. Its pathway is amino-acid biosynthesis; L-valine biosynthesis; L-valine from pyruvate: step 2/4. Involved in the biosynthesis of branched-chain amino acids (BCAA). Catalyzes an alkyl-migration followed by a ketol-acid reduction of (S)-2-acetolactate (S2AL) to yield (R)-2,3-dihydroxy-isovalerate. In the isomerase reaction, S2AL is rearranged via a Mg-dependent methyl migration to produce 3-hydroxy-3-methyl-2-ketobutyrate (HMKB). In the reductase reaction, this 2-ketoacid undergoes a metal-dependent reduction by NADPH to yield (R)-2,3-dihydroxy-isovalerate. The chain is Ketol-acid reductoisomerase (NADP(+)) from Neisseria meningitidis serogroup A / serotype 4A (strain DSM 15465 / Z2491).